The following is a 350-amino-acid chain: Probable arabinogalactan endo-beta-1,4-galactanase A (350 aa).

A signal peptide spans 1–16 (MIYSLLLSALPLLSSA). N128 is a glycosylation site (N-linked (GlcNAc...) asparagine). Catalysis depends on E152, which acts as the Proton donor. The active-site Nucleophile is the E262.

Belongs to the glycosyl hydrolase 53 family.

It is found in the secreted. It carries out the reaction The enzyme specifically hydrolyzes (1-&gt;4)-beta-D-galactosidic linkages in type I arabinogalactans.. Functionally, endogalactanase involved in the degradation of plant cell wall polysaccharides, and more particularly of hairy regions of pectin. The protein is Probable arabinogalactan endo-beta-1,4-galactanase A (galA) of Aspergillus niger (strain ATCC MYA-4892 / CBS 513.88 / FGSC A1513).